The primary structure comprises 355 residues: Heat-inducible transcription repressor HrcA (355 aa).

It belongs to the HrcA family.

Functionally, negative regulator of class I heat shock genes (grpE-dnaK-dnaJ and groELS operons). Prevents heat-shock induction of these operons. The chain is Heat-inducible transcription repressor HrcA from Prosthecochloris aestuarii (strain DSM 271 / SK 413).